Here is a 578-residue protein sequence, read N- to C-terminus: Probable arginine--tRNA ligase, mitochondrial (578 aa).

A mitochondrion-targeting transit peptide spans 1-16 (MACGFRRSIACQLSRV). Residues 133–135 (SPN), histidine 144, tyrosine 322, aspartate 326, and glutamine 350 contribute to the L-arginine site. The 'HIGH' region signature appears at 133-144 (SPNIAKKFHVGH). Lysine 568 bears the N6-acetyllysine mark.

Belongs to the class-I aminoacyl-tRNA synthetase family.

It is found in the mitochondrion membrane. The catalysed reaction is tRNA(Arg) + L-arginine + ATP = L-arginyl-tRNA(Arg) + AMP + diphosphate. Its function is as follows. Catalyzes the attachment of arginine to tRNA(Arg) in a two-step reaction: arginine is first activated by ATP to form Arg-AMP and then transferred to the acceptor end of tRNA(Arg). This Mus musculus (Mouse) protein is Probable arginine--tRNA ligase, mitochondrial (Rars2).